The chain runs to 100 residues: Urease subunit gamma (100 aa).

The protein belongs to the urease gamma subunit family. In terms of assembly, heterotrimer of UreA (gamma), UreB (beta) and UreC (alpha) subunits. Three heterotrimers associate to form the active enzyme.

It localises to the cytoplasm. It catalyses the reaction urea + 2 H2O + H(+) = hydrogencarbonate + 2 NH4(+). It functions in the pathway nitrogen metabolism; urea degradation; CO(2) and NH(3) from urea (urease route): step 1/1. The sequence is that of Urease subunit gamma from Prochlorococcus marinus (strain NATL2A).